A 431-amino-acid polypeptide reads, in one-letter code: Glutamate-1-semialdehyde 2,1-aminomutase (431 aa).

Lysine 265 is subject to N6-(pyridoxal phosphate)lysine.

This sequence belongs to the class-III pyridoxal-phosphate-dependent aminotransferase family. HemL subfamily. As to quaternary structure, homodimer. The cofactor is pyridoxal 5'-phosphate.

Its subcellular location is the cytoplasm. It catalyses the reaction (S)-4-amino-5-oxopentanoate = 5-aminolevulinate. It functions in the pathway porphyrin-containing compound metabolism; protoporphyrin-IX biosynthesis; 5-aminolevulinate from L-glutamyl-tRNA(Glu): step 2/2. In Vibrio campbellii (strain ATCC BAA-1116), this protein is Glutamate-1-semialdehyde 2,1-aminomutase.